The primary structure comprises 47 residues: Protein DVU_0533 (47 aa).

A helical membrane pass occupies residues 18-37 (WTYILMGVTLLVYVGYWLFL).

The protein localises to the cell membrane. Functionally, HMWC (high-molecular-weight cytochrome c), ORF2, ORF3, ORF4, ORF5 and ORF6 in the HMC operon form a transmembrane protein complex that allows electron flow from the periplasmic hydrogenase to the cytoplasmic enzymes that catalyze reduction of sulfates. The sequence is that of Protein DVU_0533 from Nitratidesulfovibrio vulgaris (strain ATCC 29579 / DSM 644 / CCUG 34227 / NCIMB 8303 / VKM B-1760 / Hildenborough) (Desulfovibrio vulgaris).